The sequence spans 359 residues: WAT1-related protein At4g16620 (359 aa).

The next 10 helical transmembrane spans lie at 5–25, 41–61, 77–97, 105–125, 143–163, 183–203, 206–226, 246–266, 279–299, and 305–325; these read ETLI…IYAG, LLIV…LAFL, IKLV…FLEG, MATA…WAAG, TVLC…TATL, ILGC…IVLQ, ILAE…MGGI, VIGL…SGGG, PVIV…VSAF, and FNLG…FVLW. Positions 30–154 constitute an EamA 1 domain; sequence LSQLLSLGID…LCVMGALIMS (125 aa). In terms of domain architecture, EamA 2 spans 206–324; the sequence is ILAEFPAPIS…LMFGGLYFVL (119 aa).

The protein belongs to the drug/metabolite transporter (DMT) superfamily. Plant drug/metabolite exporter (P-DME) (TC 2.A.7.4) family.

The protein localises to the membrane. In Arabidopsis thaliana (Mouse-ear cress), this protein is WAT1-related protein At4g16620.